A 221-amino-acid chain; its full sequence is Protein-L-isoaspartate O-methyltransferase (221 aa).

Ser64 is a catalytic residue.

Belongs to the methyltransferase superfamily. L-isoaspartyl/D-aspartyl protein methyltransferase family.

The protein localises to the cytoplasm. The catalysed reaction is [protein]-L-isoaspartate + S-adenosyl-L-methionine = [protein]-L-isoaspartate alpha-methyl ester + S-adenosyl-L-homocysteine. Functionally, catalyzes the methyl esterification of L-isoaspartyl residues in peptides and proteins that result from spontaneous decomposition of normal L-aspartyl and L-asparaginyl residues. It plays a role in the repair and/or degradation of damaged proteins. The polypeptide is Protein-L-isoaspartate O-methyltransferase (Thermococcus sibiricus (strain DSM 12597 / MM 739)).